The sequence spans 348 residues: Thioredoxin-related protein DsbJ (348 aa).

The signal sequence occupies residues 1 to 32; sequence MILLQNIKRCSLKQLKVLATLLLSLSLPTLEA.

It localises to the periplasm. This Chlamydia pneumoniae (Chlamydophila pneumoniae) protein is Thioredoxin-related protein DsbJ (dsbJ).